Reading from the N-terminus, the 346-residue chain is N-acetyl-gamma-glutamyl-phosphate reductase (346 aa).

The active site involves C149.

It belongs to the NAGSA dehydrogenase family. Type 1 subfamily.

The protein localises to the cytoplasm. The enzyme catalyses N-acetyl-L-glutamate 5-semialdehyde + phosphate + NADP(+) = N-acetyl-L-glutamyl 5-phosphate + NADPH + H(+). It functions in the pathway amino-acid biosynthesis; L-arginine biosynthesis; N(2)-acetyl-L-ornithine from L-glutamate: step 3/4. Its function is as follows. Catalyzes the NADPH-dependent reduction of N-acetyl-5-glutamyl phosphate to yield N-acetyl-L-glutamate 5-semialdehyde. The protein is N-acetyl-gamma-glutamyl-phosphate reductase of Geotalea daltonii (strain DSM 22248 / JCM 15807 / FRC-32) (Geobacter daltonii).